The following is a 293-amino-acid chain: Methylsterol monooxygenase 1 (293 aa).

2 consecutive transmembrane segments (helical) span residues 55–75 (LIVH…FQFI) and 100–120 (KILF…YYFT). In terms of domain architecture, Fatty acid hydroxylase spans 144-274 (GCAVIEDTWH…FTWWDKLFGT (131 aa)). The Histidine box-1 signature appears at 157–161 (HRLLH). The Histidine box-2 motif lies at 170–174 (HKVHH). The helical transmembrane segment at 199–219 (FFIGIVLLCDHVILLWAWVTI) threads the bilayer. The Histidine box-3 motif lies at 249–255 (HHDFHHM).

This sequence belongs to the sterol desaturase family. It depends on Fe cation as a cofactor. Ubiquitinated by MARCHF6, leading to proteasomal degradation.

The protein localises to the endoplasmic reticulum membrane. It catalyses the reaction 4,4-dimethyl-5alpha-cholest-7-en-3beta-ol + 6 Fe(II)-[cytochrome b5] + 3 O2 + 5 H(+) = 4alpha-carboxy-4beta-methyl-5alpha-cholest-7-ene-3beta-ol + 6 Fe(III)-[cytochrome b5] + 4 H2O. It carries out the reaction 4,4-dimethyl-5alpha-cholesta-8,24-dien-3beta-ol + 6 Fe(II)-[cytochrome b5] + 3 O2 + 5 H(+) = 4beta-methylzymosterol-4alpha-carboxylate + 6 Fe(III)-[cytochrome b5] + 4 H2O. The catalysed reaction is 4alpha-methylzymosterol + 6 Fe(II)-[cytochrome b5] + 3 O2 + 5 H(+) = 4alpha-carboxyzymosterol + 6 Fe(III)-[cytochrome b5] + 4 H2O. The enzyme catalyses 4alpha-methyl-5alpha-cholest-7-en-3beta-ol + 6 Fe(II)-[cytochrome b5] + 3 O2 + 5 H(+) = 4alpha-carboxy-5alpha-cholest-7-en-3beta-ol + 6 Fe(III)-[cytochrome b5] + 4 H2O. It catalyses the reaction 4,4-dimethyl-5alpha-cholest-8-en-3beta-ol + 6 Fe(II)-[cytochrome b5] + 3 O2 + 5 H(+) = 4alpha-carboxy-4beta-methyl-5alpha-cholest-8-en-3beta-ol + 6 Fe(III)-[cytochrome b5] + 4 H2O. It carries out the reaction 4alpha-methyl-5alpha-cholest-8-en-3beta-ol + 6 Fe(II)-[cytochrome b5] + 3 O2 + 5 H(+) = 4alpha-carboxy-5alpha-cholest-8-ene-3beta-ol + 6 Fe(III)-[cytochrome b5] + 4 H2O. It functions in the pathway steroid biosynthesis; zymosterol biosynthesis; zymosterol from lanosterol: step 3/6. Its pathway is steroid biosynthesis; cholesterol biosynthesis. Functionally, catalyzes the three-step monooxygenation required for the demethylation of 4,4-dimethyl and 4alpha-methylsterols, which can be subsequently metabolized to cholesterol. This chain is Methylsterol monooxygenase 1 (Msmo1), found in Mus musculus (Mouse).